The primary structure comprises 557 residues: TBCC domain-containing protein 1 (557 aa).

Residues 290–435 enclose the C-CAP/cofactor C-like domain; that stretch reads TTKRAKIACN…LEDHMARTGL (146 aa).

This sequence belongs to the TBCC family.

It localises to the cytoplasm. Its subcellular location is the cytoskeleton. The protein resides in the microtubule organizing center. The protein localises to the centrosome. It is found in the spindle pole. Plays a role in the regulation of centrosome and Golgi apparatus positioning, with consequences on cell shape and cell migration. The sequence is that of TBCC domain-containing protein 1 (TBCCD1) from Homo sapiens (Human).